The following is a 162-amino-acid chain: RNA replication protein (162 aa).

This sequence belongs to the potexvirus/carlavirus RNA replication protein family.

It catalyses the reaction RNA(n) + a ribonucleoside 5'-triphosphate = RNA(n+1) + diphosphate. The enzyme catalyses ATP + H2O = ADP + phosphate + H(+). In terms of biological role, RNA replication. The central part of this protein possibly functions as an ATP-binding helicase. This Lilium formosanum protein is RNA replication protein.